Here is a 110-residue protein sequence, read N- to C-terminus: Late cornified envelope protein 2D (110 aa).

Belongs to the LCE family. Skin-specific. Expression was readily detected in adult trunk skin, adult arm skin, fetal skin, penal skin, vulva, esophagus and tongue. Not expressed in the cervix, rectum, lung, colon, or placenta.

Its function is as follows. Precursors of the cornified envelope of the stratum corneum. This chain is Late cornified envelope protein 2D (LCE2D), found in Homo sapiens (Human).